Consider the following 1396-residue polypeptide: MFREGSRDDAALVKEGLFDKLEIGIASDVTIRDKWSCGEIKKPETINYRTFKPEKGGLFCEKIFGPTKDWECYCGKYKKIKHKGIVCDRCGVEVTLSKVRRERMAHIELAVPIVHIWFFKTTPSRIGNVLGMTASDLERVIYYEEYVVIDPGNTDLVKKQLLNDAKYREVVEKWGKDAFVAKMGGEAVYDLLKSEDLESLLGELKDRLRKTKSQQARMKLAKRLKIVEGFVSSSNRPEWMVLKNIPVVPPDLRPLVPLDGGRFATSDLNDLYRRVINRNNRLKAILRLKTPEVIVRNEKRMLQEAVDALFDNGRHGHPVMGAGNRPLKSLSEMLKGKNGRFRQNLLGKRVDYSGRSVIIVGPELKFNQCGLPKEMALELFEPFIIKRLKDQGSVYTIRSAKKMIQRGAPEVWDVLEEIIKGHPVLLNRAPTLHRLGIQAFEPVLIEGKAIRVHPLVCAAFNADFDGDQMAVHVPLSIEAQLEAKVLMMAPDNIFLPSSGKPVATPSKDMTLGIYYLMADPTYFPEEHGGKTKAFKDEVEVLRALNAGGFILKDEICGSRRDETGRGIHIHEKIKVRIDGQIIETTPGRVFFNTIVPKELGFQNYSMPSKRISELILQCYKKVGLEATVRFLDDLKELGFVQSTKAAISMGLKDVKIPEIKKEILKDAYDKVAIVKKQYEDGIITDGERHSKTISIWTEVSDLLSNALYSEIKKQTNSKHNPLFLMVDSGARGNKSQLKQLGALRGLMAKPNGAIIESPITSNFREGLTVLEYSISSHGARKGLADTALKTADSGYLTRRLVDVAQDVIITERDCGTLNHIEVSTIRQGSEELLPLKDRVYGRTVSENIYQPGDKSNVLAYAGDVLTSAQAEAIDDAGIESVKIRSTLTCESRRGVCAKCYGLNLANGHLIGLGEAVGIIAAQSIGEPGTQLTMRTFHLGGVAATSSTPEIVAECDGILVYLDLRVVVDQEGNNLVLNKMGALHLVQDEGRSLSEYKKLLSTKSIESLATFPVELGAKILVNDGAAVTAGQRIAEVELHNIPIICDKPGFVHYEDLVEGVSTEKVANKNTGLVELIVKQHRGELHPQIAIYADANMKELVGTYAIPSGAIISVEEGQRIAPGMLLARLPRGAIKTKDITGGLPRVAELVEARKPEDAADIAKIDGVVDFKGIQKNKRILVVRDEITGMEEEHLISLTKHLIVQRGDSVIKGQQLTDGLVVPHEILAICGVRELQKYLVNEVQEVYRLQGVDINDKHIEIIVRQMLQKVRITDPGDTTLLFGEDVDKKEFYEENRRTEEDGGKPAQAVPVLLGITKASLGTESFISAASFQDTTRVLTDAACSSKTDYLLGFKENVIMGHMIPGGTGFDTHKRIKQHLEKEQEDLVFDFDSEFESVAG.

Positions 72, 74, 87, and 90 each coordinate Zn(2+). Residues Asp463, Asp465, and Asp467 each coordinate Mg(2+). The Zn(2+) site is built by Cys814, Cys889, Cys896, and Cys899.

It belongs to the RNA polymerase beta' chain family. The RNAP catalytic core consists of 2 alpha, 1 beta, 1 beta' and 1 omega subunit. When a sigma factor is associated with the core the holoenzyme is formed, which can initiate transcription. It depends on Mg(2+) as a cofactor. The cofactor is Zn(2+).

The catalysed reaction is RNA(n) + a ribonucleoside 5'-triphosphate = RNA(n+1) + diphosphate. In terms of biological role, DNA-dependent RNA polymerase catalyzes the transcription of DNA into RNA using the four ribonucleoside triphosphates as substrates. This is DNA-directed RNA polymerase subunit beta' from Chlamydia trachomatis serovar L2 (strain ATCC VR-902B / DSM 19102 / 434/Bu).